A 449-amino-acid chain; its full sequence is Streptomycin-6-phosphate phosphatase (449 aa).

The N-terminal stretch at 1 to 32 (MRFAYGRLPWRRGAVLGSALLVLVTAPAASTA) is a signal peptide. D50 provides a ligand contact to Mg(2+). D50 contacts Zn(2+). Residue S99 is the Phosphoserine intermediate of the active site. D151 and T153 together coordinate Mg(2+). The tract at residues 268–290 (APGGTAPQRCATRNPGRPAGTPD) is disordered. E321 provides a ligand contact to Mg(2+). Zn(2+) contacts are provided by D326, H330, D368, H369, and H412.

It belongs to the alkaline phosphatase family. The cofactor is Mg(2+). Zn(2+) is required as a cofactor.

It is found in the secreted. It catalyses the reaction streptomycin 6-phosphate + H2O = streptomycin + phosphate. It functions in the pathway antibiotic biosynthesis; streptomycin biosynthesis. Functionally, specifically cleaves both streptomycin-6-phosphate and, more slowly, streptomycin-3''-phosphate during the biosynthesis of streptomycin. The protein is Streptomycin-6-phosphate phosphatase (strK) of Streptomyces griseus.